A 583-amino-acid chain; its full sequence is Pectinesterase/pectinesterase inhibitor U1 (583 aa).

Positions 1-40 (MTRVEDFFSKQIDFCKRKKKIYLAIVASVLLVAAVIGVVA) are cleaved as a signal peptide. A pectinesterase inhibitor U1 region spans residues 60–221 (SSAHAIVKSA…EKMCSNALAM (162 aa)). N-linked (GlcNAc...) asparagine glycans are attached at residues N85, N105, and N224. The tract at residues 272–570 (DVVVAADGSG…TPGRFIAGGS (299 aa)) is pectinesterase U1. 2 residues coordinate substrate: T347 and Q377. D400 (proton donor; for pectinesterase activity) is an active-site residue. C414 and C434 are joined by a disulfide. D421 (nucleophile; for pectinesterase activity) is an active-site residue. Residues R489 and W491 each contribute to the substrate site.

In the N-terminal section; belongs to the PMEI family. This sequence in the C-terminal section; belongs to the pectinesterase family.

Its subcellular location is the secreted. It is found in the cell wall. It catalyses the reaction [(1-&gt;4)-alpha-D-galacturonosyl methyl ester](n) + n H2O = [(1-&gt;4)-alpha-D-galacturonosyl](n) + n methanol + n H(+). Its pathway is glycan metabolism; pectin degradation; 2-dehydro-3-deoxy-D-gluconate from pectin: step 1/5. Acts in the modification of cell walls via demethylesterification of cell wall pectin. The polypeptide is Pectinesterase/pectinesterase inhibitor U1 (PMEU1) (Solanum lycopersicum (Tomato)).